The sequence spans 412 residues: Protein MITOFERRINLIKE 1, chloroplastic (412 aa).

A chloroplast-targeting transit peptide spans 1–92; that stretch reads MEARLSETLG…PGPEFLKWIK (92 aa). Residues 43–83 are disordered; sequence VRNPKLKTKSSQKPPKFSANFRRSDPPFASTSISDPTHEKP. Solcar repeat units lie at residues 112-198, 206-288, and 298-392; these read ERAI…GKSL, PTVL…LKAA, and LEPL…ARLT. 6 consecutive transmembrane segments (helical) span residues 115–135, 167–187, 208–228, 262–282, 303–323, and 365–385; these read IIGAGAGGLAGAFTYVTLLPL, ILGFYSGVSAVIVGSTFSSAV, VLIPPTAGAMGNIISSAIMVP, AGYSATLLRNLPAGVLSYSSF, SVCCGALAGAISASITTPLDV, and TRGMGPRVVHSACFSAIGYFA.

This sequence belongs to the mitochondrial carrier (TC 2.A.29) family. As to expression, expressed in leaves, developing flowers and siliques.

The protein localises to the plastid. It is found in the chloroplast inner membrane. In terms of biological role, probably involved in iron transport into chloroplasts. This chain is Protein MITOFERRINLIKE 1, chloroplastic (MFL1), found in Arabidopsis thaliana (Mouse-ear cress).